Reading from the N-terminus, the 778-residue chain is Endonuclease MutS2 (778 aa).

332 to 339 (GPNTGGKT) contributes to the ATP binding site. Residues 703-778 (IDLRGKMVDE…GLGCTVVTLK (76 aa)) enclose the Smr domain.

Belongs to the DNA mismatch repair MutS family. MutS2 subfamily. As to quaternary structure, homodimer. Binds to stalled ribosomes, contacting rRNA.

Endonuclease that is involved in the suppression of homologous recombination and thus may have a key role in the control of bacterial genetic diversity. Functionally, acts as a ribosome collision sensor, splitting the ribosome into its 2 subunits. Detects stalled/collided 70S ribosomes which it binds and splits by an ATP-hydrolysis driven conformational change. Acts upstream of the ribosome quality control system (RQC), a ribosome-associated complex that mediates the extraction of incompletely synthesized nascent chains from stalled ribosomes and their subsequent degradation. Probably generates substrates for RQC. The protein is Endonuclease MutS2 of Fusobacterium nucleatum subsp. nucleatum (strain ATCC 25586 / DSM 15643 / BCRC 10681 / CIP 101130 / JCM 8532 / KCTC 2640 / LMG 13131 / VPI 4355).